A 354-amino-acid chain; its full sequence is Methylthioribose-1-phosphate isomerase (354 aa).

The Proton donor role is filled by D246.

Belongs to the eIF-2B alpha/beta/delta subunits family. MtnA subfamily.

Its subcellular location is the cytoplasm. The protein localises to the nucleus. It catalyses the reaction 5-(methylsulfanyl)-alpha-D-ribose 1-phosphate = 5-(methylsulfanyl)-D-ribulose 1-phosphate. The protein operates within amino-acid biosynthesis; L-methionine biosynthesis via salvage pathway; L-methionine from S-methyl-5-thio-alpha-D-ribose 1-phosphate: step 1/6. Catalyzes the interconversion of methylthioribose-1-phosphate (MTR-1-P) into methylthioribulose-1-phosphate (MTRu-1-P). The protein is Methylthioribose-1-phosphate isomerase (mri1) of Xenopus tropicalis (Western clawed frog).